Here is a 461-residue protein sequence, read N- to C-terminus: MLKIFNTLTRQKEEFKPIHAGEVGMYVCGITVYDLCHIGHGRTFVAFDVVARYLRFLGYKLKYVRNITDIDDKIIKRANENGESFVALVDRMIAEMHQDFDALNILRPDSEPRATHHIQEIIELTRTLIEKGHAYVADNGDVMFDVPTDPTYGQLSRQDLEQLQAGARVDVVDVKRNPMDFVLWKMSKEGEPSWPSPWGEGRPGWHIECSAMNCKQLGNHFDIHGGGSDLMFPHHENEIAQSTCAHDGEYVNYWMHSGMVMVDREKMSKSLGNFFTVRDVLKYYDAETVRYFLMSGHYRSQLNYSEENLKQARASLERLYTALRGTDKSAAPAGGEAFEARFVEAMNDDFNTPEAYSVLFDMAREVNRLKGEDMTAANAMASHLRKISGVLGLLEQEPDVFLQSGAQADDGEVAEIEALIQQRLDARKAKDWAAADAARDRLAEMGIILEDGPQGTTWRRK.

C28 is a Zn(2+) binding site. A 'HIGH' region motif is present at residues 30 to 40 (ITVYDLCHIGH). 3 residues coordinate Zn(2+): C209, H234, and E238. The 'KMSKS' region signature appears at 266–270 (KMSKS). K269 lines the ATP pocket.

It belongs to the class-I aminoacyl-tRNA synthetase family. Monomer. Zn(2+) is required as a cofactor.

It localises to the cytoplasm. The catalysed reaction is tRNA(Cys) + L-cysteine + ATP = L-cysteinyl-tRNA(Cys) + AMP + diphosphate. The chain is Cysteine--tRNA ligase from Salmonella agona (strain SL483).